Here is a 165-residue protein sequence, read N- to C-terminus: Nucleotide-binding protein Chy400_2003 (165 aa).

Belongs to the YajQ family.

Nucleotide-binding protein. The protein is Nucleotide-binding protein Chy400_2003 of Chloroflexus aurantiacus (strain ATCC 29364 / DSM 637 / Y-400-fl).